We begin with the raw amino-acid sequence, 275 residues long: Large ribosomal subunit protein uL2 (275 aa).

The interval 236-263 (EGRGKGQHPVTPWGMPTKGYKTRRGRRA) is disordered.

Belongs to the universal ribosomal protein uL2 family. In terms of assembly, part of the 50S ribosomal subunit. Forms a bridge to the 30S subunit in the 70S ribosome.

Its function is as follows. One of the primary rRNA binding proteins. Required for association of the 30S and 50S subunits to form the 70S ribosome, for tRNA binding and peptide bond formation. It has been suggested to have peptidyltransferase activity; this is somewhat controversial. Makes several contacts with the 16S rRNA in the 70S ribosome. The protein is Large ribosomal subunit protein uL2 of Pseudothermotoga lettingae (strain ATCC BAA-301 / DSM 14385 / NBRC 107922 / TMO) (Thermotoga lettingae).